Here is a 335-residue protein sequence, read N- to C-terminus: NmrA-like family domain-containing oxidoreductase ptmS (335 aa).

NADP(+) contacts are provided by residues 12 to 17 (GATGNQ), 39 to 43 (RDPNS), 60 to 61 (DG), 81 to 88 (INSDDPVF), lysine 139, and 163 to 166 (FLEN). Residues 161–206 (GYFLENFLFKQGAFIMGGFPWETDAEGYLTWKVPYWGGEEQIPFLS) form an interaction with ASS1 region.

It belongs to the NmrA-type oxidoreductase family.

The protein operates within secondary metabolite biosynthesis. Functionally, nmrA-like family domain-containing oxidoreductase; part of the gene cluster that mediates the biosynthesis of the indole diterpenes penitrems. The geranylgeranyl diphosphate (GGPP) synthase ptmG catalyzes the first step in penitrem biosynthesis via conversion of farnesyl pyrophosphate and isopentyl pyrophosphate into geranylgeranyl pyrophosphate (GGPP). Condensation of indole-3-glycerol phosphate with GGPP by the prenyl transferase ptmC then forms 3-geranylgeranylindole (3-GGI). Epoxidation by the FAD-dependent monooxygenase ptmM leads to a epoxidized-GGI that is substrate of the terpene cyclase ptmB for cyclization to yield paspaline. Paspaline is subsequently converted to 13-desoxypaxilline by the cytochrome P450 monooxygenase ptmP, the latter being then converted to paxilline by the cytochrome P450 monooxygenase ptmQ. Paxilline is converted to beta-paxitriol via C-10 ketoreduction by the short-chain dehydrogenase ptmH which can be monoprenylated at the C-20 by the indole diterpene prenyltransferase ptmD. A two-step elimination (acetylation and elimination) process performed by the O-acetyltransferase ptmV and ptmI leads to the production of the prenylated form of penijanthine. The FAD-linked oxidoreductase ptmO then converts the prenylated form of penijanthine into PC-M5 which is in turn transformed into PC-M4 by the aromatic dimethylallyltransferase ptmE. Five sequential oxidative transformations performed by the cytochrome P450 monooxygenases ptmK, ptmU, ptmL, ptmN and ptmJ yield the various penitrem compounds. PtmK, ptmU and ptmM are involved in the formation of the key bicyclic ring of penitrem C via the formation of the intermediates secopenitrem D and penitrem D. PtmL catalyzes the epoxidation of penitrem D and C to yield penitrem B and F, respectively. PtmJ catalyzes the last benzylic hydroxylation to convert penitrem B to prenitrem E and penitrem F to penitrem A. This Penicillium ochrochloron protein is NmrA-like family domain-containing oxidoreductase ptmS.